The chain runs to 127 residues: UPF0102 protein Mmar10_3014 (127 aa).

It belongs to the UPF0102 family.

The chain is UPF0102 protein Mmar10_3014 from Maricaulis maris (strain MCS10) (Caulobacter maris).